The sequence spans 675 residues: Putative exonuclease GOR (675 aa).

The span at Val66–Gly79 shows a compositional bias: basic and acidic residues. 2 disordered regions span residues Val66–Gly90 and Ala225–Thr263. Residues Met358–Asp483 are GOR1-125 epitope.

Belongs to the REXO1/REXO3 family.

It is found in the cytoplasm. The protein resides in the nucleus. The polypeptide is Putative exonuclease GOR (REXO1L1P) (Homo sapiens (Human)).